The sequence spans 459 residues: Bifunctional protein GlmU (459 aa).

The tract at residues 1–230 is pyrophosphorylase; the sequence is MVKRYAVILA…FEETIGVNDR (230 aa). UDP-N-acetyl-alpha-D-glucosamine is bound by residues 9 to 12, K23, Q73, and 78 to 79; these read LAAG and GT. Residue D103 coordinates Mg(2+). 4 residues coordinate UDP-N-acetyl-alpha-D-glucosamine: G140, E155, N170, and N228. Residue N228 participates in Mg(2+) binding. The tract at residues 231-251 is linker; that stretch reads VALAEAEKIMRERICRKHMMN. The segment at 252-459 is N-acetyltransferase; the sequence is GVTIIDPAHT…VDRLSIKKNS (208 aa). Residues R333 and K351 each coordinate UDP-N-acetyl-alpha-D-glucosamine. H363 acts as the Proton acceptor in catalysis. Positions 366 and 377 each coordinate UDP-N-acetyl-alpha-D-glucosamine. Residues 386-387, A423, and R440 each bind acetyl-CoA; that span reads NY.

In the N-terminal section; belongs to the N-acetylglucosamine-1-phosphate uridyltransferase family. The protein in the C-terminal section; belongs to the transferase hexapeptide repeat family. As to quaternary structure, homotrimer. The cofactor is Mg(2+).

Its subcellular location is the cytoplasm. It carries out the reaction alpha-D-glucosamine 1-phosphate + acetyl-CoA = N-acetyl-alpha-D-glucosamine 1-phosphate + CoA + H(+). The enzyme catalyses N-acetyl-alpha-D-glucosamine 1-phosphate + UTP + H(+) = UDP-N-acetyl-alpha-D-glucosamine + diphosphate. It functions in the pathway nucleotide-sugar biosynthesis; UDP-N-acetyl-alpha-D-glucosamine biosynthesis; N-acetyl-alpha-D-glucosamine 1-phosphate from alpha-D-glucosamine 6-phosphate (route II): step 2/2. The protein operates within nucleotide-sugar biosynthesis; UDP-N-acetyl-alpha-D-glucosamine biosynthesis; UDP-N-acetyl-alpha-D-glucosamine from N-acetyl-alpha-D-glucosamine 1-phosphate: step 1/1. It participates in bacterial outer membrane biogenesis; LPS lipid A biosynthesis. Functionally, catalyzes the last two sequential reactions in the de novo biosynthetic pathway for UDP-N-acetylglucosamine (UDP-GlcNAc). The C-terminal domain catalyzes the transfer of acetyl group from acetyl coenzyme A to glucosamine-1-phosphate (GlcN-1-P) to produce N-acetylglucosamine-1-phosphate (GlcNAc-1-P), which is converted into UDP-GlcNAc by the transfer of uridine 5-monophosphate (from uridine 5-triphosphate), a reaction catalyzed by the N-terminal domain. The chain is Bifunctional protein GlmU from Geobacillus sp. (strain WCH70).